Here is a 444-residue protein sequence, read N- to C-terminus: ATP-dependent protease ATPase subunit HslU (444 aa).

ATP contacts are provided by residues isoleucine 18 and 60-65 (GVGKTE). Positions 141–161 (DAWGNNEEGNNDSGTRQSFRK) are disordered. Residues 147–157 (EEGNNDSGTRQ) show a composition bias toward polar residues. ATP contacts are provided by aspartate 257, glutamate 322, and arginine 394.

It belongs to the ClpX chaperone family. HslU subfamily. In terms of assembly, a double ring-shaped homohexamer of HslV is capped on each side by a ring-shaped HslU homohexamer. The assembly of the HslU/HslV complex is dependent on binding of ATP.

It is found in the cytoplasm. ATPase subunit of a proteasome-like degradation complex; this subunit has chaperone activity. The binding of ATP and its subsequent hydrolysis by HslU are essential for unfolding of protein substrates subsequently hydrolyzed by HslV. HslU recognizes the N-terminal part of its protein substrates and unfolds these before they are guided to HslV for hydrolysis. This Aliivibrio fischeri (strain ATCC 700601 / ES114) (Vibrio fischeri) protein is ATP-dependent protease ATPase subunit HslU.